A 423-amino-acid chain; its full sequence is Histidine--tRNA ligase (423 aa).

The protein belongs to the class-II aminoacyl-tRNA synthetase family. Homodimer.

The protein localises to the cytoplasm. It catalyses the reaction tRNA(His) + L-histidine + ATP = L-histidyl-tRNA(His) + AMP + diphosphate + H(+). In Orientia tsutsugamushi (strain Ikeda) (Rickettsia tsutsugamushi), this protein is Histidine--tRNA ligase.